A 329-amino-acid chain; its full sequence is Beta-ketoacyl-[acyl-carrier-protein] synthase III (329 aa).

Active-site residues include Cys123 and His256. The ACP-binding stretch occupies residues Gln257–Arg261. Asn286 is a catalytic residue.

It belongs to the thiolase-like superfamily. FabH family. Homodimer.

Its subcellular location is the cytoplasm. It carries out the reaction malonyl-[ACP] + acetyl-CoA + H(+) = 3-oxobutanoyl-[ACP] + CO2 + CoA. The protein operates within lipid metabolism; fatty acid biosynthesis. Functionally, catalyzes the condensation reaction of fatty acid synthesis by the addition to an acyl acceptor of two carbons from malonyl-ACP. Catalyzes the first condensation reaction which initiates fatty acid synthesis and may therefore play a role in governing the total rate of fatty acid production. Possesses both acetoacetyl-ACP synthase and acetyl transacylase activities. Its substrate specificity determines the biosynthesis of branched-chain and/or straight-chain of fatty acids. The protein is Beta-ketoacyl-[acyl-carrier-protein] synthase III of Paraburkholderia phymatum (strain DSM 17167 / CIP 108236 / LMG 21445 / STM815) (Burkholderia phymatum).